An 820-amino-acid polypeptide reads, in one-letter code: Crinkler effector protein 108 (820 aa).

A signal peptide spans 1–17 (MVKLYCAVVGVAGSAFS). The interval 18–55 (VRVDESDTVDDLKDAIKAKKPNDFKDIDADKLELYVAK) is LQLFLAK domain. Residues 58 to 111 (GVWLTEADVKSGVADITGLVRLEVVRAKLFSVGLSDEVVSEVDAQEEAAGRGPV) form a DWL domain region. An HVLVXXP motif motif is present at residues 112 to 117 (NVLVVV). The Host nuclear localization signal signature appears at 118-124 (PMKKRRV). The segment at 125-820 (DAGVDEERRF…MHYDDDEADL (696 aa)) is C-terminal DC effector domain. Residues Asn-268, Asn-371, and Asn-703 are each glycosylated (N-linked (GlcNAc...) asparagine). The segment at 754–791 (NINTASFHELRRLEGVGDATAAKIIAERTIRRFSNLED) is hhH DNA-binding domain.

Belongs to the Crinkler effector family.

It localises to the secreted. Its subcellular location is the host nucleus. Functionally, secreted effector that suppresses plant basal defense and promotes plant susceptibility via targeting promoters of host HSP gene and thus inhibiting their expression. CRN108 binds directly to heat shock elements (HSEs) 5'-GAAnnTTC-3' and interferes with the association of the HSE with the plant heat shock transcription factors, which initializes HSP gene expression in response to stress. The polypeptide is Crinkler effector protein 108 (Phytophthora sojae (Soybean stem and root rot agent)).